A 252-amino-acid chain; its full sequence is CD99 antigen-like protein 2 (252 aa).

The N-terminal stretch at 1–23 (MEKTLWTWTLLAVFSLLVVKGMS) is a signal peptide. Residues 30 to 170 (DALGDDDDDE…DLDPADDNNY (141 aa)) form a disordered region. Residues 57-68 (AAVKPTLKPVKP) show a composition bias toward low complexity. Basic and acidic residues predominate over residues 96 to 120 (NDIKGKGKDSGKGDKEVGGGSRDDG). Residues 178 to 198 (TIAGIVSAVAMALVGAVSSYI) form a helical membrane-spanning segment.

Belongs to the CD99 family.

It is found in the cell membrane. The protein localises to the cell junction. In terms of biological role, may function as a homophilic adhesion molecule. The chain is CD99 antigen-like protein 2 (cd99l2) from Danio rerio (Zebrafish).